The sequence spans 313 residues: Adhesin MafA 1/2 (313 aa).

The first 14 residues, 1-14 (MKTLLLLIPLVLTA), serve as a signal peptide directing secretion. C15 carries the N-palmitoyl cysteine lipid modification. Residue C15 is the site of S-diacylglycerol cysteine attachment. Polar residues predominate over residues 282-298 (GDTTAQNRPDFKQNNGK). The segment at 282–313 (GDTTAQNRPDFKQNNGKNPDVGNEVIRRRKGG) is disordered.

The protein belongs to the MafA family.

The protein localises to the cell outer membrane. The polypeptide is Adhesin MafA 1/2 (mafA1) (Neisseria meningitidis serogroup C (strain 053442)).